Consider the following 187-residue polypeptide: Superoxide dismutase [Cu-Zn] (187 aa).

The N-terminal stretch at 1-23 (MMKMKTLLALAISGICAAGVANA) is a signal peptide. The Cu cation site is built by His-80, His-82, and His-105. The cysteines at positions 87 and 183 are disulfide-linked. 4 residues coordinate Zn(2+): His-105, His-114, His-123, and Asp-126. Residue His-161 participates in Cu cation binding.

Belongs to the Cu-Zn superoxide dismutase family. As to quaternary structure, homodimer. The cofactor is Cu cation. Zn(2+) is required as a cofactor.

It is found in the periplasm. The catalysed reaction is 2 superoxide + 2 H(+) = H2O2 + O2. In terms of biological role, destroys radicals which are normally produced within the cells and which are toxic to biological systems. May confer survival advantage by accelerating dismutation of superoxide of environmental origin to hydrogen peroxide, disruptive to the normal mucociliary clearance process in the host. This chain is Superoxide dismutase [Cu-Zn] (sodC), found in Haemophilus parainfluenzae.